The following is a 1038-amino-acid chain: Fibronectin-binding protein A (1038 aa).

The N-terminal stretch at 1 to 36 (MKNNLRYGIRKHKLGAASVFLGTMIVVGMGQDKEAA) is a signal peptide. The YSIRK-G/S signaling motif motif lies at 7-18 (YGIRKHKLGAAS). The disordered stretch occupies residues 37–193 (ASEQKTTTVE…VSEVKGTDVT (157 aa)). The tract at residues 37–507 (ASEQKTTTVE…SNKADGNGKN (471 aa)) is ligand-binding A region. Over residues 39–92 (EQKTTTVEENGNSATDNKTSETQTTATNVNHIEETQSYNATVTEQPSNATQVTT) the composition is skewed to polar residues. The span at 112–121 (TVKEEEKPQV) shows a compositional bias: basic and acidic residues. The span at 122–164 (KETTQPQDNSGNQRQVDLTPKKVTQNQGTETQVEVAQPRTASE) shows a compositional bias: polar residues. Positions 174-189 (DVAEAKEASDVSEVKG) are enriched in basic and acidic residues. Residues 189–507 (GTDVTSKVTV…SNKADGNGKN (319 aa)) are fibrinogen/elastin/tropoelastin-binding. The segment at 508–868 (GQIIQDNDFE…EGQQTIEEDT (361 aa)) is fibronectin-binding. A B-1 repeat occupies 541-570 (ENQDNTPLDIDYHTAIDGEGGYVDGYIETI). The segment at 541 to 600 (ENQDNTPLDIDYHTAIDGEGGYVDGYIETIEETDSSAIDIDYHTAVDSEVGHVGGYTESS) is 2 X approximate tandem repeats. Residues 571 to 600 (EETDSSAIDIDYHTAVDSEVGHVGGYTESS) form a B-2 repeat. 3 disordered regions span residues 736-804 (LGYE…GGNI), 825-976 (IEED…GKVV), and 989-1015 (VAPT…NKGM). The D-1 repeat unit spans residues 741 to 778 (GQNSGNQSFEEDTEEDKPKYEQGGNIVDIDFDSVPQIH). A 4 X approximate tandem repeats region spans residues 741–898 (GQNSGNQSFE…TPEVPSEPET (158 aa)). One copy of the D-2 repeat lies at 779–816 (GQNKGDQSFEEDTEKDKPKYEHGGNIIDIDFDSVPQIH). A D-3 repeat occupies 817–855 (GFNKHNEIIEEDTNKDKPNYQFGGHNSVDFEEDTLPKVS). Over residues 825–834 (IEEDTNKDKP) the composition is skewed to basic and acidic residues. One copy of the D-4 repeat lies at 856–898 (GQNEGQQTIEEDTTPPTPPTPEVPSEPETPMPPTPEVPSEPET). Residues 870–958 (PPTPPTPEVP…PAEPGKPVPP (89 aa)) are compositionally biased toward pro residues. WR repeat units follow at residues 899-912 (PTPP…EPET), 913-926 (PTPP…EPET), 927-940 (PTPP…EPET), 941-954 (PTPP…EPGK), and 955-968 (PVPP…KPSK). Residues 899 to 968 (PTPPTPEVPS…AKEEPKKPSK (70 aa)) form a 5 X tandem repeats, Pro-rich (WR) region. An LPXTG sorting signal motif is present at residues 1002–1006 (LPETG). Thr1005 bears the Pentaglycyl murein peptidoglycan amidated threonine mark. A propeptide spans 1006–1038 (GGEESTNKGMLFGGLFSILGLALLRRNKKNNKA) (removed by sortase).

Its subcellular location is the secreted. It is found in the cell wall. Promotes bacterial attachment to multiple substrates, such as fibronectin (Fn), fibrinogen (Fg), elastin peptides and tropoelastin. This confers to S.aureus the ability to invade endothelial cells. Promotes adherence to and aggregation of activated platelets. This chain is Fibronectin-binding protein A (fnbA), found in Staphylococcus aureus (strain Mu50 / ATCC 700699).